A 617-amino-acid chain; its full sequence is Translation initiation factor IF-2 (617 aa).

Residues 1-11 (MSKHKPRHFQK) are compositionally biased toward basic residues. The tract at residues 1 to 25 (MSKHKPRHFQKNKFDNRAKTSAKQQ) is disordered. The tr-type G domain maps to 119 to 288 (PRPPIVTIMG…ILLVAEVEDY (170 aa)). The interval 128-135 (GHVDHGKT) is G1. 128 to 135 (GHVDHGKT) is a GTP binding site. The G2 stretch occupies residues 153–157 (GITQK). The tract at residues 175-178 (DTPG) is G3. Residues 175-179 (DTPGH) and 229-232 (NKMD) each bind GTP. A G4 region spans residues 229 to 232 (NKMD). Residues 265–267 (SAL) form a G5 region.

Belongs to the TRAFAC class translation factor GTPase superfamily. Classic translation factor GTPase family. IF-2 subfamily.

It localises to the cytoplasm. Its function is as follows. One of the essential components for the initiation of protein synthesis. Protects formylmethionyl-tRNA from spontaneous hydrolysis and promotes its binding to the 30S ribosomal subunits. Also involved in the hydrolysis of GTP during the formation of the 70S ribosomal complex. This Mycoplasma pneumoniae (strain ATCC 29342 / M129 / Subtype 1) (Mycoplasmoides pneumoniae) protein is Translation initiation factor IF-2 (infB).